We begin with the raw amino-acid sequence, 682 residues long: Amphiphysin (682 aa).

Coiled coils occupy residues 10 to 84 (AKNV…LHEV) and 144 to 191 (DYDS…QEEL). The 217-residue stretch at 24-240 (VLQKLGKADE…MTKLGDQHAD (217 aa)) folds into the BAR domain. Disordered regions lie at residues 244-310 (TIQG…PKLT), 446-470 (ILAE…ETTG), 501-530 (GAVR…QEKV), and 561-606 (AAAE…ASDM). Pro residues predominate over residues 261–274 (PSPPEEVSPLPSPT). Positions 503-527 (VRTEQEAAAEGDKPQGEEKDVDVSQ) are enriched in basic and acidic residues. A compositionally biased stretch (polar residues) spans 567-596 (TQGTDSETSQIGSEQKATEEIQTTPSQDQP). In terms of domain architecture, SH3 spans 609 to 682 (GFLFKVEVLH…FPENFTRHLE (74 aa)).

In terms of assembly, heterodimer with BIN1. Binds SH3GLB1. As to expression, is abundant in the forebrain and cerebellum. It is also found in the adrenal gland, anterior and posterior pituitary.

It localises to the cytoplasmic vesicle. The protein resides in the secretory vesicle. The protein localises to the synaptic vesicle membrane. It is found in the cytoplasm. Its subcellular location is the cytoskeleton. May participate in mechanisms of regulated exocytosis in synapses and certain endocrine cell types. May control the properties of the membrane associated cytoskeleton. This is Amphiphysin (AMPH) from Gallus gallus (Chicken).